Consider the following 154-residue polypeptide: 6,7-dimethyl-8-ribityllumazine synthase (154 aa).

Residues Phe-23, 57–59, and 81–83 each bind 5-amino-6-(D-ribitylamino)uracil; these read AFE and AVI. 86–87 lines the (2S)-2-hydroxy-3-oxobutyl phosphate pocket; that stretch reads ST. His-89 serves as the catalytic Proton donor. Phe-114 contacts 5-amino-6-(D-ribitylamino)uracil. Arg-128 lines the (2S)-2-hydroxy-3-oxobutyl phosphate pocket.

The protein belongs to the DMRL synthase family.

It catalyses the reaction (2S)-2-hydroxy-3-oxobutyl phosphate + 5-amino-6-(D-ribitylamino)uracil = 6,7-dimethyl-8-(1-D-ribityl)lumazine + phosphate + 2 H2O + H(+). It functions in the pathway cofactor biosynthesis; riboflavin biosynthesis; riboflavin from 2-hydroxy-3-oxobutyl phosphate and 5-amino-6-(D-ribitylamino)uracil: step 1/2. Catalyzes the formation of 6,7-dimethyl-8-ribityllumazine by condensation of 5-amino-6-(D-ribitylamino)uracil with 3,4-dihydroxy-2-butanone 4-phosphate. This is the penultimate step in the biosynthesis of riboflavin. This is 6,7-dimethyl-8-ribityllumazine synthase from Campylobacter jejuni subsp. jejuni serotype O:2 (strain ATCC 700819 / NCTC 11168).